Reading from the N-terminus, the 601-residue chain is Zinc finger protein 37 (601 aa).

The KRAB domain occupies 1-70 (MATPEPAESD…VRANKNSSSS (70 aa)). Threonine 3 carries the post-translational modification Phosphothreonine. Serine 9 bears the Phosphoserine mark. Polar residues predominate over residues 30-43 (ETCSNPASMGNQDP). Residues 30-254 (ETCSNPASMG…SKSDKAPGSG (225 aa)) form a disordered region. Low complexity predominate over residues 60-70 (SVRANKNSSSS). Positions 77 to 88 (TGTSAKVQQDGA) are enriched in polar residues. Composition is skewed to basic and acidic residues over residues 115 to 136 (KSSECTLLEKKNVHSKHDPSEK), 164 to 174 (KKPDTANEYRK), and 183 to 238 (VNRD…EKRK). Residues 257-279 (YECNQCGKVLSHKQGLLDHQRTH) form a C2H2-type 1 zinc finger. The C2H2-type 2; atypical zinc finger occupies 285–303 (YECYECGIAFSQKSHLVVH). 10 C2H2-type zinc fingers span residues 314–337 (YECVQCGKAHGHKHALTDHLRISH), 343–365 (YKCNECGKTFRHSSNLMQHIRSH), 371–393 (YECKECGKSFRYNSSFTEHVRTH), 399–421 (YECNECGKAFKYGSSLTKHMRIH), 427–449 (FECTECGKTFSKKSHLVIHQRTH), 455–477 (YKCKECGKAFGHSSSLTYHMRTH), 483–505 (FECNKCGKAFKQIEGLTQHQRVH), 511–533 (YECVECGKAFSQKSHLIVHQRTH), 539–561 (FECYECGKAFNAKSQLVIHQRSH), and 570–592 (YECVECGKAFKQNASLTRHMKTH).

It belongs to the krueppel C2H2-type zinc-finger protein family. As to expression, expressed in testes, brain, kidney, spleen, thymus, lung, and at low levels in liver.

It is found in the nucleus. May be involved in transcriptional regulation. In Rattus norvegicus (Rat), this protein is Zinc finger protein 37 (Zfp37).